The chain runs to 1085 residues: Phosphorylase b kinase regulatory subunit beta (1085 aa).

A phosphoserine mark is found at S10, S19, and S693. Calmodulin-binding stretches follow at residues 760–787 and 912–943; these read RVYR…VVDS and SGRC…ILER. Residue C1082 is the site of S-farnesyl cysteine attachment.

It belongs to the phosphorylase b kinase regulatory chain family. As to quaternary structure, hexadecamer of 4 heterotetramers, each composed of alpha, beta, gamma, and delta subunits. Alpha (PHKA1 or PHKA2) and beta (PHKB) are regulatory subunits, gamma (PHKG1 or PHKG2) is the catalytic subunit, and delta is calmodulin. In terms of processing, although the final Cys may be farnesylated, the terminal tripeptide is probably not removed, and the C-terminus is not methylated.

The protein resides in the cell membrane. It participates in glycan biosynthesis; glycogen metabolism. Its activity is regulated as follows. By phosphorylation of various serine residues. Phosphorylase b kinase catalyzes the phosphorylation of serine in certain substrates, including troponin I. The beta chain acts as a regulatory unit and modulates the activity of the holoenzyme in response to phosphorylation. This Mus musculus (Mouse) protein is Phosphorylase b kinase regulatory subunit beta (Phkb).